A 394-amino-acid chain; its full sequence is 4-hydroxybenzoate 3-monooxygenase (NAD(P)H) (394 aa).

FAD is bound by residues Glu-32, 42–47 (TIRAGV), and Gln-102. Substrate-binding positions include Tyr-203, 214–216 (STR), and Tyr-224. Asp-288 serves as a coordination point for FAD. Residue Pro-295 participates in substrate binding. An FAD-binding site is contributed by 301–302 (LN).

The protein belongs to the aromatic-ring hydroxylase family. The cofactor is FAD.

The catalysed reaction is 4-hydroxybenzoate + NADH + O2 + H(+) = 3,4-dihydroxybenzoate + NAD(+) + H2O. The enzyme catalyses 4-hydroxybenzoate + NADPH + O2 + H(+) = 3,4-dihydroxybenzoate + NADP(+) + H2O. Involved in the degradation of 4-hydroxybenzoate (4HB) via the protocatechuate (PCA) 2,3-cleavage pathway. Catalyzes the conversion of 4HB into 2-hydroxypenta-2,4-dienoate (HPD). It is highly specific for 4-hydroxybenzoate, and is able to utilize both NADH and NADPH as electron donors at approximately equal rates. This Paenibacillus sp protein is 4-hydroxybenzoate 3-monooxygenase (NAD(P)H) (praI).